The primary structure comprises 599 residues: Ecdysone oxidase (599 aa).

Residues 137–140 (NDMV) and 537–538 (WH) each bind FAD. His-538 serves as the catalytic Proton acceptor.

This sequence belongs to the GMC oxidoreductase family. It depends on FAD as a cofactor.

The catalysed reaction is ecdysone + O2 = 3-dehydroecdysone + H2O2. In terms of biological role, involved in the inactivation of ecdysteroid molting hormones by converting ecdysteroids into 3-dehydroecdysteroids. The sequence is that of Ecdysone oxidase from Spodoptera littoralis (Egyptian cotton leafworm).